Reading from the N-terminus, the 332-residue chain is MSLKEKLIVNVHKEEQPHAHNKITVVGVGAVGMACAISILMKDLADELALVDVIEDKLKGEMLDLQHGSLFLRTPKIVSGKDYAVTAHSKLVIITAGARQQEGESRLNLVQRNVNIFKFIIPNVVKYSPDCKLLVVSNPVDILTYVAWKISGFPKHRVIGSGCNLDSARFRHLMAEKLGIHPLSCHGWIVGEHGDSSVPVWSGVNVAGVSLKGLHPDMGTDGDKENWKQVHKQVVDSAYEVIKLKGYTSWAIGLSVADLAETIMKNLRRVHPVSTMVKGMHGINDDVFLSVPCVLGYSGITDVVKMTLKSEEEDKLRKSADTLWGIQKELQF.

Residues 29–57 (GAVG…IEDK) and arginine 99 each bind NAD(+). Residues arginine 106, asparagine 138, and arginine 169 each coordinate substrate. NAD(+) is bound at residue asparagine 138. Histidine 193 functions as the Proton acceptor in the catalytic mechanism. Threonine 248 provides a ligand contact to substrate.

This sequence belongs to the LDH/MDH superfamily. LDH family. Homotetramer.

It is found in the cytoplasm. The enzyme catalyses (S)-lactate + NAD(+) = pyruvate + NADH + H(+). The protein operates within fermentation; pyruvate fermentation to lactate; (S)-lactate from pyruvate: step 1/1. In terms of biological role, interconverts simultaneously and stereospecifically pyruvate and lactate with concomitant interconversion of NADH and NAD(+). The sequence is that of L-lactate dehydrogenase A chain (LDHA) from Sceloporus woodi (Florida scrub lizard).